The sequence spans 425 residues: Serine--tRNA ligase (425 aa).

229–231 (TSE) lines the L-serine pocket. Residues 259-261 (RKE) and V275 each bind ATP. E282 lines the L-serine pocket. 349 to 352 (EVTS) lines the ATP pocket. T384 contributes to the L-serine binding site.

Belongs to the class-II aminoacyl-tRNA synthetase family. Type-1 seryl-tRNA synthetase subfamily. In terms of assembly, homodimer. The tRNA molecule binds across the dimer.

It localises to the cytoplasm. It catalyses the reaction tRNA(Ser) + L-serine + ATP = L-seryl-tRNA(Ser) + AMP + diphosphate + H(+). The catalysed reaction is tRNA(Sec) + L-serine + ATP = L-seryl-tRNA(Sec) + AMP + diphosphate + H(+). It functions in the pathway aminoacyl-tRNA biosynthesis; selenocysteinyl-tRNA(Sec) biosynthesis; L-seryl-tRNA(Sec) from L-serine and tRNA(Sec): step 1/1. Its function is as follows. Catalyzes the attachment of serine to tRNA(Ser). Is also able to aminoacylate tRNA(Sec) with serine, to form the misacylated tRNA L-seryl-tRNA(Sec), which will be further converted into selenocysteinyl-tRNA(Sec). The sequence is that of Serine--tRNA ligase from Borrelia garinii subsp. bavariensis (strain ATCC BAA-2496 / DSM 23469 / PBi) (Borreliella bavariensis).